Reading from the N-terminus, the 101-residue chain is Urease subunit beta (101 aa).

This sequence belongs to the urease beta subunit family. In terms of assembly, heterotrimer of UreA (gamma), UreB (beta) and UreC (alpha) subunits. Three heterotrimers associate to form the active enzyme.

Its subcellular location is the cytoplasm. It carries out the reaction urea + 2 H2O + H(+) = hydrogencarbonate + 2 NH4(+). It participates in nitrogen metabolism; urea degradation; CO(2) and NH(3) from urea (urease route): step 1/1. This is Urease subunit beta from Burkholderia cenocepacia (strain ATCC BAA-245 / DSM 16553 / LMG 16656 / NCTC 13227 / J2315 / CF5610) (Burkholderia cepacia (strain J2315)).